Here is a 118-residue protein sequence, read N- to C-terminus: Large ribosomal subunit protein uL22 (118 aa).

It belongs to the universal ribosomal protein uL22 family. Part of the 50S ribosomal subunit.

Its function is as follows. This protein binds specifically to 23S rRNA; its binding is stimulated by other ribosomal proteins, e.g. L4, L17, and L20. It is important during the early stages of 50S assembly. It makes multiple contacts with different domains of the 23S rRNA in the assembled 50S subunit and ribosome. The globular domain of the protein is located near the polypeptide exit tunnel on the outside of the subunit, while an extended beta-hairpin is found that lines the wall of the exit tunnel in the center of the 70S ribosome. The polypeptide is Large ribosomal subunit protein uL22 (Nostoc punctiforme (strain ATCC 29133 / PCC 73102)).